Reading from the N-terminus, the 379-residue chain is MSGGEASITGRTAPELNASAAPLDDERELGETVAATALLLAIILVTIVGNSLVIISVFTYRPLRSVQNFFVVSLAVADLTVALFVLPLNVAYRLLNQWLLGSYLCQMWLTCDILCCTSSILNLCVIALDRYWAITDPINYAQKRTIRRVNTMIAAVWALSLVISVPPLLGWNDWPAQFTEDTPCTLTQERLFVVYSSSGSFFIPLIIMSVVYAKIFFATKRRLRERTRKLGTLAVPAPPQRTSSRPLAELESVASQEDETEPSPEPEPLSSRADKPANGISVHQFIEEKQRISLSKERKAARVLGVIMGVFVVCWLPFFLMYAIVPFCTNCAPPSQRVVDFVTWLGYVNSSLNPIIYTIYNKDFRTAFSRLLRCDRRMS.

At 5 to 36 the chain is on the extracellular side; that stretch reads EASITGRTAPELNASAAPLDDERELGETVAAT. N-linked (GlcNAc...) asparagine glycosylation occurs at asparagine 17. A helical membrane pass occupies residues 37 to 58; that stretch reads ALLLAIILVTIVGNSLVIISVF. At 59–68 the chain is on the cytoplasmic side; it reads TYRPLRSVQN. The chain crosses the membrane as a helical span at residues 69 to 90; that stretch reads FFVVSLAVADLTVALFVLPLNV. Residues 91 to 107 lie on the Extracellular side of the membrane; the sequence is AYRLLNQWLLGSYLCQM. Cysteines 105 and 184 form a disulfide. The chain crosses the membrane as a helical span at residues 108–128; that stretch reads WLTCDILCCTSSILNLCVIAL. Residues 129–148 lie on the Cytoplasmic side of the membrane; that stretch reads DRYWAITDPINYAQKRTIRR. Residues 149-171 form a helical membrane-spanning segment; it reads VNTMIAAVWALSLVISVPPLLGW. Residues 172-196 lie on the Extracellular side of the membrane; that stretch reads NDWPAQFTEDTPCTLTQERLFVVYS. A helical membrane pass occupies residues 197–218; it reads SSGSFFIPLIIMSVVYAKIFFA. Over 219-303 the chain is Cytoplasmic; it reads TKRRLRERTR…LSKERKAARV (85 aa). The interval 234–276 is disordered; the sequence is AVPAPPQRTSSRPLAELESVASQEDETEPSPEPEPLSSRADKP. A helical membrane pass occupies residues 304–325; sequence LGVIMGVFVVCWLPFFLMYAIV. Residues 326-340 lie on the Extracellular side of the membrane; it reads PFCTNCAPPSQRVVD. The helical transmembrane segment at 341-362 threads the bilayer; sequence FVTWLGYVNSSLNPIIYTIYNK. Residues 363–375 lie on the Cytoplasmic side of the membrane; the sequence is DFRTAFSRLLRCD.

It belongs to the G-protein coupled receptor 1 family.

It localises to the cell membrane. In terms of biological role, probable G-protein coupled receptor for an amine. The chain is Probable G-protein coupled receptor No18 from Amphibalanus amphitrite (Striped barnacle).